The sequence spans 103 residues: Histone H4 (103 aa).

Residues 1–14 (MSGRGKGGKGLGKG) show a composition bias toward gly residues. The tract at residues 1–20 (MSGRGKGGKGLGKGGAKRHR) is disordered. Ser2 is subject to N-acetylserine. Ser2 carries the phosphoserine modification. An Asymmetric dimethylarginine; by PRMT1; alternate modification is found at Arg4. Position 4 is a citrulline; alternate (Arg4). Residue Arg4 is modified to Omega-N-methylarginine; by PRMT1; alternate. Symmetric dimethylarginine; by PRMT5 and PRMT7; alternate is present on Arg4. Lys6, Lys9, Lys13, and Lys17 each carry N6-(2-hydroxyisobutyryl)lysine; alternate. The residue at position 6 (Lys6) is an N6-acetyl-N6-methyllysine; alternate. Lys6, Lys9, Lys13, and Lys17 each carry N6-acetyllysine. Residues Lys6, Lys9, Lys13, and Lys17 each carry the N6-butyryllysine; alternate modification. Lys6 is subject to N6-glutaryllysine; alternate. Residues Lys6, Lys9, Lys13, and Lys17 each carry the N6-lactoyllysine; alternate modification. Lys9 bears the N6-propionyllysine; alternate mark. Lys13 bears the N6-acetyl-N6-methyllysine; alternate mark. Lys13 carries the N6-glutaryllysine; alternate modification. At Lys13 the chain carries N6-methyllysine; alternate. An N6-propionyllysine; alternate modification is found at Lys17. Residues 17-21 (KRHRK) mediate DNA binding. Lys21 bears the N6-methyllysine; alternate mark. Lys21 is modified (N6,N6,N6-trimethyllysine; alternate). Lys21 bears the N6,N6-dimethyllysine; alternate mark. Position 21 is an N6-methylated lysine (Lys21). 2 positions are modified to N6-(2-hydroxyisobutyryl)lysine; alternate: Lys32 and Lys45. An N6-acetyllysine modification is found at Lys32. Lys32 and Lys45 each carry N6-butyryllysine; alternate. The residue at position 32 (Lys32) is an N6-glutaryllysine; alternate. An N6-lactoyllysine; alternate modification is found at Lys32. Lys32 and Lys45 each carry N6-propionyllysine; alternate. Residue Lys32 is modified to N6-succinyllysine; alternate. Lys32 is covalently cross-linked (Glycyl lysine isopeptide (Lys-Gly) (interchain with G-Cter in UFM1); alternate). Ser48 carries the phosphoserine; by PAK2 modification. Position 52 is a phosphotyrosine (Tyr52). Lys60 carries the N6-acetyllysine modification. An N6-glutaryllysine; alternate mark is found at Lys60, Lys78, and Lys80. Lys60 is subject to N6-(2-hydroxyisobutyryl)lysine. An N6-(2-hydroxyisobutyryl)lysine; alternate mark is found at Lys78 and Lys80. Lys78 and Lys80 each carry N6-butyryllysine; alternate. Residue Lys78 is modified to N6-lactoyllysine; alternate. N6-propionyllysine; alternate occurs at positions 78 and 80. At Lys78 the chain carries N6-succinyllysine. Lys80 is subject to N6-acetyllysine. Tyr89 is modified (phosphotyrosine). The residue at position 92 (Lys92) is an N6-(2-hydroxyisobutyryl)lysine; alternate. At Lys92 the chain carries N6-butyryllysine; alternate. Position 92 is an N6-glutaryllysine; alternate (Lys92). Lys92 is subject to N6-lactoyllysine; alternate. Lys92 carries the N6-propionyllysine; alternate modification. An N6-succinyllysine; alternate modification is found at Lys92. N6-acetyllysine; alternate is present on Lys92. Lys92 is covalently cross-linked (Glycyl lysine isopeptide (Lys-Gly) (interchain with G-Cter in ubiquitin); alternate).

Belongs to the histone H4 family. In terms of assembly, the nucleosome is a histone octamer containing two molecules each of H2A, H2B, H3 and H4 assembled in one H3-H4 heterotetramer and two H2A-H2B heterodimers. The octamer wraps approximately 147 bp of DNA. In terms of processing, acetylation at Lys-6 (H4K5ac), Lys-9 (H4K8ac), Lys-13 (H4K12ac) and Lys-17 (H4K16ac) occurs in coding regions of the genome but not in heterochromatin. Post-translationally, citrullination at Arg-4 (H4R3ci) by PADI4 impairs methylation. Monomethylation and asymmetric dimethylation at Arg-4 (H4R3me1 and H4R3me2a, respectively) by PRMT1 favors acetylation at Lys-9 (H4K8ac) and Lys-13 (H4K12ac). Demethylation is performed by JMJD6. Symmetric dimethylation on Arg-4 (H4R3me2s) by the PRDM1/PRMT5 complex may play a crucial role in the germ-cell lineage. In terms of processing, monomethylated, dimethylated or trimethylated at Lys-21 (H4K20me1, H4K20me2, H4K20me3). Monomethylation is performed by KMT5A/SET8. Trimethylation is performed by KMT5B and KMT5C and induces gene silencing. Monomethylated at Lys-13 (H4K12me1) by N6AMT1; H4K12me1 modification is present at the promoters of numerous genes encoding cell cycle regulators. Post-translationally, acetyl-methylated at Lys-6 and Lys-13 (H4K5acme and H4K12acme, respectively), acetyl-methylation is an epigenetic mark of active chromatin associated with increased transcriptional initiation. Acetyl-methylation is formed by acetylation by EP300/p300 of lysine residues that are already monomethylated on the same side chain. H4K5acme and H4K12acme marks specifically bind BRD2. Phosphorylated by pak2 at Ser-48 (H4S47ph). This phosphorylation increases the association of H3.3-H4 with the histone chaperone HIRA, thus promoting nucleosome assembly of H3.3-H4 and inhibiting nucleosome assembly of H3.1-H4. In terms of processing, ubiquitinated by the CUL4-DDB-RBX1 complex in response to ultraviolet irradiation. This may weaken the interaction between histones and DNA and facilitate DNA accessibility to repair proteins. Monoubiquitinated at Lys-92 of histone H4 (H4K91ub1) in response to DNA damage. The exact role of H4K91ub1 in DNA damage response is still unclear but it may function as a licensing signal for additional histone H4 post-translational modifications such as H4 Lys-21 methylation (H4K20me). Post-translationally, sumoylated, which is associated with transcriptional repression. Butyrylation of histones marks active promoters and competes with histone acetylation. In terms of processing, glutarylation at Lys-92 (H4K91glu) destabilizes nucleosomes by promoting dissociation of the H2A-H2B dimers from nucleosomes. Post-translationally, ufmylated; monofmylated by UFL1 at Lys-32 (H4K31Ufm1) in response to DNA damage. Lactylated in macrophages by EP300/P300 by using lactoyl-CoA directly derived from endogenous or exogenous lactate, leading to stimulates gene transcription. Delactylated by SIRT3 at Lys-17 (H4K16la).

It localises to the nucleus. The protein localises to the chromosome. Functionally, core component of nucleosome. Nucleosomes wrap and compact DNA into chromatin, limiting DNA accessibility to the cellular machineries which require DNA as a template. Histones thereby play a central role in transcription regulation, DNA repair, DNA replication and chromosomal stability. DNA accessibility is regulated via a complex set of post-translational modifications of histones, also called histone code, and nucleosome remodeling. This chain is Histone H4, found in Xenopus laevis (African clawed frog).